Reading from the N-terminus, the 310-residue chain is Olfactory receptor 5P52 (310 aa).

At Met1–Ile25 the chain is on the extracellular side. N-linked (GlcNAc...) asparagine glycosylation is present at Asn5. Residues Val26–Ile46 form a helical membrane-spanning segment. Residues Thr47–Gln54 lie on the Cytoplasmic side of the membrane. The chain crosses the membrane as a helical span at residues Leu55–Thr75. Over Ser76–Ala99 the chain is Extracellular. An intrachain disulfide couples Cys97 to Cys189. A helical transmembrane segment spans residues Gln100–Tyr120. The Cytoplasmic portion of the chain corresponds to Asp121 to Ser133. A helical membrane pass occupies residues Thr134–Val154. At Asn155–Gly196 the chain is on the extracellular side. A helical membrane pass occupies residues Ile197 to Ser217. Over Tyr218–Ala237 the chain is Cytoplasmic. The helical transmembrane segment at Phe238–Ile258 threads the bilayer. The Extracellular portion of the chain corresponds to Tyr259–Asn271. Residues Lys272–Leu292 form a helical membrane-spanning segment. At Arg293–Ser310 the chain is on the cytoplasmic side.

Belongs to the G-protein coupled receptor 1 family.

It is found in the cell membrane. Functionally, potential odorant receptor. In Mus musculus (Mouse), this protein is Olfactory receptor 5P52.